The following is a 200-amino-acid chain: UPF0316 protein SACOL1973 (200 aa).

3 helical membrane-spanning segments follow: residues 8–28 (PWLM…FLTM), 40–60 (IAAS…GLVM), and 66–86 (IQNI…GMKI).

Belongs to the UPF0316 family.

The protein localises to the cell membrane. In Staphylococcus aureus (strain COL), this protein is UPF0316 protein SACOL1973.